We begin with the raw amino-acid sequence, 289 residues long: Bifunctional protein FolD (289 aa).

NADP(+) contacts are provided by residues 166 to 168 and Ile-232; that span reads GVS.

This sequence belongs to the tetrahydrofolate dehydrogenase/cyclohydrolase family. Homodimer.

It catalyses the reaction (6R)-5,10-methylene-5,6,7,8-tetrahydrofolate + NADP(+) = (6R)-5,10-methenyltetrahydrofolate + NADPH. It carries out the reaction (6R)-5,10-methenyltetrahydrofolate + H2O = (6R)-10-formyltetrahydrofolate + H(+). Its pathway is one-carbon metabolism; tetrahydrofolate interconversion. In terms of biological role, catalyzes the oxidation of 5,10-methylenetetrahydrofolate to 5,10-methenyltetrahydrofolate and then the hydrolysis of 5,10-methenyltetrahydrofolate to 10-formyltetrahydrofolate. This is Bifunctional protein FolD from Methylobacillus flagellatus (strain ATCC 51484 / DSM 6875 / VKM B-1610 / KT).